The sequence spans 239 residues: Uridylate kinase (239 aa).

Position 13-16 (13-16) interacts with ATP; that stretch reads KLSG. A UMP-binding site is contributed by Gly-55. Positions 56 and 60 each coordinate ATP. UMP contacts are provided by residues Asp-75 and 136 to 143; that span reads TGNPFFTT. Thr-163, Asn-164, Tyr-169, and Asp-172 together coordinate ATP.

Belongs to the UMP kinase family. In terms of assembly, homohexamer.

It localises to the cytoplasm. The catalysed reaction is UMP + ATP = UDP + ADP. It functions in the pathway pyrimidine metabolism; CTP biosynthesis via de novo pathway; UDP from UMP (UMPK route): step 1/1. Its activity is regulated as follows. Inhibited by UTP. In terms of biological role, catalyzes the reversible phosphorylation of UMP to UDP. In Neisseria meningitidis serogroup C / serotype 2a (strain ATCC 700532 / DSM 15464 / FAM18), this protein is Uridylate kinase.